The primary structure comprises 179 residues: Inner membrane-spanning protein YciB (179 aa).

Helical transmembrane passes span 11 to 31 (ILFF…TLII), 52 to 69 (LIMG…AYFN), 71 to 91 (LEFL…ILLV), 121 to 141 (LGWA…SQYL), and 149 to 169 (FKTF…GVYI).

This sequence belongs to the YciB family.

It localises to the cell inner membrane. Plays a role in cell envelope biogenesis, maintenance of cell envelope integrity and membrane homeostasis. The chain is Inner membrane-spanning protein YciB from Histophilus somni (strain 129Pt) (Haemophilus somnus).